A 507-amino-acid polypeptide reads, in one-letter code: Peroxisomal membrane protein PEX14 (507 aa).

2 stretches are compositionally biased toward polar residues: residues M1–P10 and E32–K48. A disordered region spans residues M1 to P52. The Peroxisomal segment spans residues M1 to W152. Involved in interaction with PEX5 regions lie at residues I58–L65 and R78–R97. The helical transmembrane segment at Y153–I173 threads the bilayer. Over K174–N507 the chain is Cytoplasmic. Residues V288 to D302 are compositionally biased toward polar residues. Disordered regions lie at residues V288–Y329, N344–S394, A409–P435, and P448–N507. A compositionally biased stretch (low complexity) spans A308–A322. Residues Q378–S394 show a composition bias toward polar residues.

It belongs to the peroxin-14 family. In terms of assembly, interacts with PEX13; forming the PEX13-PEX14 docking complex. Interacts with PEX5 (via WxxxF/Y motifs). Expressed in flowers, siliques, leaves and roots.

It localises to the peroxisome membrane. In terms of biological role, component of the PEX13-PEX14 docking complex, a translocon channel that specifically mediates the import of peroxisomal cargo proteins bound to PEX5 receptor. The PEX13-PEX14 docking complex forms a large import pore which can be opened to a diameter of about 9 nm. Mechanistically, PEX5 receptor along with cargo proteins associates with the PEX14 subunit of the PEX13-PEX14 docking complex in the cytosol, leading to the insertion of the receptor into the organelle membrane with the concomitant translocation of the cargo into the peroxisome matrix. In Arabidopsis thaliana (Mouse-ear cress), this protein is Peroxisomal membrane protein PEX14.